The chain runs to 184 residues: Ribosome maturation factor RimM (184 aa).

Residues Glu-101–Leu-180 enclose the PRC barrel domain.

It belongs to the RimM family. Binds ribosomal protein uS19.

Its subcellular location is the cytoplasm. Functionally, an accessory protein needed during the final step in the assembly of 30S ribosomal subunit, possibly for assembly of the head region. Essential for efficient processing of 16S rRNA. May be needed both before and after RbfA during the maturation of 16S rRNA. It has affinity for free ribosomal 30S subunits but not for 70S ribosomes. The sequence is that of Ribosome maturation factor RimM from Helicobacter pylori (strain ATCC 700392 / 26695) (Campylobacter pylori).